Reading from the N-terminus, the 308-residue chain is Cytochrome b (308 aa).

4 helical membrane-spanning segments follow: residues 1–21 (FGSL…LLAT), 45–66 (WLIR…YLHI), 81–101 (WNTG…GYVL), and 146–166 (FFAL…IHFT). Heme b is bound at residue H65. The heme b site is built by H150 and H164. H169 serves as a coordination point for a ubiquinone. 3 helical membrane-spanning segments follow: residues 194 to 214 (VKDI…ALFS), 256 to 276 (LGGV…PFLH), and 288 to 308 (LSQF…WVGS).

The protein belongs to the cytochrome b family. As to quaternary structure, the cytochrome bc1 complex contains 11 subunits: 3 respiratory subunits (MT-CYB, CYC1 and UQCRFS1), 2 core proteins (UQCRC1 and UQCRC2) and 6 low-molecular weight proteins (UQCRH/QCR6, UQCRB/QCR7, UQCRQ/QCR8, UQCR10/QCR9, UQCR11/QCR10 and a cleavage product of UQCRFS1). This cytochrome bc1 complex then forms a dimer. Heme b serves as cofactor.

It localises to the mitochondrion inner membrane. Its function is as follows. Component of the ubiquinol-cytochrome c reductase complex (complex III or cytochrome b-c1 complex) that is part of the mitochondrial respiratory chain. The b-c1 complex mediates electron transfer from ubiquinol to cytochrome c. Contributes to the generation of a proton gradient across the mitochondrial membrane that is then used for ATP synthesis. The polypeptide is Cytochrome b (MT-CYB) (Colaptes rupicola (Southern Andean flicker)).